Here is a 460-residue protein sequence, read N- to C-terminus: ATP synthase subunit beta (460 aa).

An ATP-binding site is contributed by 150-157; that stretch reads GGAGVGKT.

Belongs to the ATPase alpha/beta chains family. As to quaternary structure, F-type ATPases have 2 components, CF(1) - the catalytic core - and CF(0) - the membrane proton channel. CF(1) has five subunits: alpha(3), beta(3), gamma(1), delta(1), epsilon(1). CF(0) has three main subunits: a(1), b(2) and c(9-12). The alpha and beta chains form an alternating ring which encloses part of the gamma chain. CF(1) is attached to CF(0) by a central stalk formed by the gamma and epsilon chains, while a peripheral stalk is formed by the delta and b chains.

It localises to the cell inner membrane. The catalysed reaction is ATP + H2O + 4 H(+)(in) = ADP + phosphate + 5 H(+)(out). In terms of biological role, produces ATP from ADP in the presence of a proton gradient across the membrane. The catalytic sites are hosted primarily by the beta subunits. The sequence is that of ATP synthase subunit beta from Salmonella paratyphi A (strain ATCC 9150 / SARB42).